The sequence spans 1285 residues: Ataxin-2 (1285 aa).

Disordered regions lie at residues 1–85 (MRSS…PGSR), 111–178 (ARAC…SPGA), and 197–224 (PVAS…GLPQ). The segment covering 29–38 (SLPRTARRGG) has biased composition (basic residues). A compositionally biased stretch (pro residues) spans 48–65 (AGPPPRGPGAPPRGPRSP). Residues 128–144 (SSSARPAPGCPRPACEP) show a composition bias toward low complexity. Positions 205–214 (AGGGRPGLGR) are enriched in gly residues. Phosphoserine occurs at positions 218 and 219. Residues 237 to 314 (RMVHILTSVV…FVVVQFKDTD (78 aa)) enclose the Sm domain. A phosphoserine mark is found at serine 362 and serine 435. Basic and acidic residues-rich tracts occupy residues 428–440 (ALEN…EEKY) and 447–461 (CSDR…RDNK). 2 disordered regions span residues 428-925 (ALEN…HQQP) and 1111-1191 (AALH…QSSF). Serine 477 is modified (phosphoserine). Residues 498–510 (ASHTSDFNPNAGS) are compositionally biased toward polar residues. Serine 523 bears the Phosphoserine mark. Over residues 526 to 552 (PSHSSRPPSRYQSGPNSLPPRAATHTR) the composition is skewed to low complexity. Pro residues predominate over residues 554–567 (PSRPPSRPSRPPSH). Serine 593 carries the phosphoserine modification. Over residues 596 to 606 (AQRHPRNHRVS) the composition is skewed to basic residues. At arginine 609 the chain carries Asymmetric dimethylarginine; alternate. Arginine 609 carries the post-translational modification Omega-N-methylarginine; alternate. Residues serine 611 and serine 653 each carry the phosphoserine modification. Positions 662-672 (PRQSSIGNSPS) are enriched in polar residues. Positions 685 to 694 (PAEAVSMPVP) are enriched in low complexity. Serine 697 is subject to Phosphoserine. Threonine 710 carries the post-translational modification Phosphothreonine. Residues 737 to 746 (ASETSPSFSK) are compositionally biased toward polar residues. Serine 741 and serine 753 each carry phosphoserine. The span at 757–773 (SEHRKQIDDLKKFKNDF) shows a compositional bias: basic and acidic residues. The segment covering 776–789 (QPSSTSESMDQLLS) has biased composition (polar residues). Residues 790 to 813 (KNREGEKSRDLIKDKTEASAKDSF) show a composition bias toward basic and acidic residues. Over residues 814 to 838 (IDSSSSSSNCTSGSSKTNSPSISPS) the composition is skewed to low complexity. Phosphoserine occurs at positions 827, 828, 832, 836, 838, 859, and 860. Over residues 851 to 862 (VTSQGVQTSSPA) the composition is skewed to polar residues. Lysine 864 is covalently cross-linked (Glycyl lysine isopeptide (Lys-Gly) (interchain with G-Cter in SUMO2)). Positions 864-881 (KQEKDDREEKKDTTEQVR) are enriched in basic and acidic residues. Composition is skewed to low complexity over residues 896 to 907 (SFSQPKPSTTPT) and 1128 to 1165 (GQQQ…QQSA).

This sequence belongs to the ataxin-2 family. As to quaternary structure, interacts with RBFOX1. Monomer. Can also form homodimers. Interacts with polyribosomes. Interacts with EGFR. Interacts with SH3GL3. Interacts with SH3GL2, SH3KBP1 and CBL. Interacts with ATXN2L. In terms of tissue distribution, expressed in the heart, lung, liver, kidney, skeletal muscle, spleen and intestine. Predominant expression was seen in the brain where a high level expression was found in the pyramidal cortical neurons, large brain stem neurons and cerebellar Purkinje cells. All three isoforms were found in all the tissues except skeletal muscle where only isoform 1 was found.

The protein localises to the cytoplasm. Its function is as follows. Involved in EGFR trafficking, acting as negative regulator of endocytic EGFR internalization at the plasma membrane. This chain is Ataxin-2 (Atxn2), found in Mus musculus (Mouse).